The chain runs to 447 residues: Argininosuccinate synthase (447 aa).

Residues Ala17–Ser25 and Ala43 each bind ATP. Residue Tyr99 coordinates L-citrulline. ATP contacts are provided by Gly129 and Thr131. L-aspartate-binding residues include Thr131, Asn135, and Asp136. An L-citrulline-binding site is contributed by Asn135. Asp136 is a binding site for ATP. Arg139 and Ser192 together coordinate L-citrulline. Position 194 (Asp194) interacts with ATP. L-citrulline-binding residues include Thr201, Glu203, and Glu280.

Belongs to the argininosuccinate synthase family. Type 2 subfamily. As to quaternary structure, homotetramer.

Its subcellular location is the cytoplasm. It catalyses the reaction L-citrulline + L-aspartate + ATP = 2-(N(omega)-L-arginino)succinate + AMP + diphosphate + H(+). Its pathway is amino-acid biosynthesis; L-arginine biosynthesis; L-arginine from L-ornithine and carbamoyl phosphate: step 2/3. The chain is Argininosuccinate synthase from Shigella flexneri serotype 5b (strain 8401).